Here is a 545-residue protein sequence, read N- to C-terminus: MKSSLALALLVGGAIASGPQQQVLREPVDHPQAAETPLQKISDIFGHLSEQAGNVWEDVMDKFPDTLMDAITQTPPPKKHNRRPDSEWDHIVRGSDVQAVWVEGDAGEKHRKVGGRLDTYDLRVKAVDPSNLGVDTVKQYSGYLDDNENDKHLFYWFFESRNDPKNDPVVLWLNGGPGCSSLTGLFLELGPSSITKQLKVEYNEFSWNSNASVIFLDQPVNVGYSYSSSSVSNTQAAAKDVYALLTLFFEQFPEYSRQDFHIAGESYAGHYIPVFASEIMSHSHRNINLKSILVGNGLTDPLSQYPHYRPMACGEGGYPAVLSSSSCQAMDNALPRCLAMIQACYNTESRWSCVPASIYCNNALIGPYQRSGMNPYDVRSKCEGGSLCYTQLDDISKYLNRNAVMESLGAEVSSYESCNMDINRNFLFQGDWMQPYMRVVPTLLAQMPVLIYAGDADFICNWLGNKAWTEALEYPGHNEFAAAEMKNLTSQNHEDVRVIGQVKSAGNFTFMRLFGGGHMVPMDQPEASLEFFNRWLGGEWSDKSP.

The N-terminal stretch at 1–18 is a signal peptide; the sequence is MKSSLALALLVGGAIASG. Positions 19-125 are excised as a propeptide; sequence PQQQVLREPV…RLDTYDLRVK (107 aa). Disulfide bonds link Cys-179-Cys-418, Cys-313-Cys-327, Cys-337-Cys-360, Cys-344-Cys-353, and Cys-382-Cys-388. Asn-210 carries N-linked (GlcNAc...) asparagine glycosylation. Ser-266 is a catalytic residue. Residue Asp-457 is part of the active site. N-linked (GlcNAc...) asparagine glycans are attached at residues Asn-487 and Asn-507. The active site involves His-518.

This sequence belongs to the peptidase S10 family.

Its subcellular location is the vacuole. It catalyses the reaction Release of a C-terminal amino acid with broad specificity.. Functionally, vacuolar carboxypeptidase involved in degradation of small peptides. Digests preferentially peptides containing an aliphatic or hydrophobic residue in P1' position, as well as methionine, leucine or phenylalanine in P1 position of ester substrate. This is Carboxypeptidase Y homolog A (CPYA) from Ajellomyces capsulatus (strain NAm1 / WU24) (Darling's disease fungus).